A 167-amino-acid chain; its full sequence is Lipoprotein signal peptidase (167 aa).

Transmembrane regions (helical) follow at residues 10–30, 68–88, and 98–118; these read LIWL…KAWV, WQMW…TFWL, and SALP…DRFL. Catalysis depends on residues aspartate 124 and aspartate 142. Residues 138–158 form a helical membrane-spanning segment; sequence FNLADSAIVAGAIGIGLLSLF.

The protein belongs to the peptidase A8 family.

The protein localises to the cell inner membrane. The catalysed reaction is Release of signal peptides from bacterial membrane prolipoproteins. Hydrolyzes -Xaa-Yaa-Zaa-|-(S,diacylglyceryl)Cys-, in which Xaa is hydrophobic (preferably Leu), and Yaa (Ala or Ser) and Zaa (Gly or Ala) have small, neutral side chains.. It functions in the pathway protein modification; lipoprotein biosynthesis (signal peptide cleavage). Functionally, this protein specifically catalyzes the removal of signal peptides from prolipoproteins. The protein is Lipoprotein signal peptidase of Xylella fastidiosa (strain M23).